A 369-amino-acid polypeptide reads, in one-letter code: tRNA(Met) cytidine acetate ligase (369 aa).

ATP contacts are provided by residues 7–20, G96, N152, and R175; that span reads VAEF…HKYL.

The protein belongs to the TmcAL family.

Its subcellular location is the cytoplasm. It carries out the reaction cytidine(34) in elongator tRNA(Met) + acetate + ATP = N(4)-acetylcytidine(34) in elongator tRNA(Met) + AMP + diphosphate. In terms of biological role, catalyzes the formation of N(4)-acetylcytidine (ac(4)C) at the wobble position of elongator tRNA(Met), using acetate and ATP as substrates. First activates an acetate ion to form acetyladenylate (Ac-AMP) and then transfers the acetyl group to tRNA to form ac(4)C34. The sequence is that of tRNA(Met) cytidine acetate ligase from Streptococcus agalactiae serotype III (strain NEM316).